A 680-amino-acid chain; its full sequence is DNA ligase (680 aa).

NAD(+) is bound by residues 44-48, 94-95, and E124; these read DYIYD and SL. K126 acts as the N6-AMP-lysine intermediate in catalysis. Residues R147, E181, K297, and K321 each coordinate NAD(+). C415, C418, C433, and C438 together coordinate Zn(2+). The region spanning 598 to 680 is the BRCT domain; it reads DENSFFYGKK…VDEQVKEDGK (83 aa).

This sequence belongs to the NAD-dependent DNA ligase family. LigA subfamily. Requires Mg(2+) as cofactor. It depends on Mn(2+) as a cofactor.

The catalysed reaction is NAD(+) + (deoxyribonucleotide)n-3'-hydroxyl + 5'-phospho-(deoxyribonucleotide)m = (deoxyribonucleotide)n+m + AMP + beta-nicotinamide D-nucleotide.. In terms of biological role, DNA ligase that catalyzes the formation of phosphodiester linkages between 5'-phosphoryl and 3'-hydroxyl groups in double-stranded DNA using NAD as a coenzyme and as the energy source for the reaction. It is essential for DNA replication and repair of damaged DNA. This chain is DNA ligase, found in Leuconostoc mesenteroides subsp. mesenteroides (strain ATCC 8293 / DSM 20343 / BCRC 11652 / CCM 1803 / JCM 6124 / NCDO 523 / NBRC 100496 / NCIMB 8023 / NCTC 12954 / NRRL B-1118 / 37Y).